Consider the following 138-residue polypeptide: Large ribosomal subunit protein uL16 (138 aa).

Positions 1–16 are enriched in basic residues; the sequence is MLIPRRVKHRKQHHPG. The interval 1 to 25 is disordered; sequence MLIPRRVKHRKQHHPGRSGQATGGT.

The protein belongs to the universal ribosomal protein uL16 family. As to quaternary structure, part of the 50S ribosomal subunit.

Functionally, binds 23S rRNA and is also seen to make contacts with the A and possibly P site tRNAs. This Renibacterium salmoninarum (strain ATCC 33209 / DSM 20767 / JCM 11484 / NBRC 15589 / NCIMB 2235) protein is Large ribosomal subunit protein uL16.